A 229-amino-acid polypeptide reads, in one-letter code: MNPLTRVALAVAAFAALVLALSACGPAHVAGHVPKRRDYAVPDAAGQEAQVASAGSTWREGRAASMLYTDARALRENDLVVVRIEEIADAKRSADTDLTRRSELNASIEAFLTSLDTPYALKGGATTGFKGLGSTARTERLTATVPAVVRKVLPNGNLFIEGHRVVLVNAEEQHFYISGVVRPIDIDQENGVKSSMVADAEIEFTGRGVLSDNQRQGWLSRLLGWFWPF.

Residues Met-1–Ala-23 form the signal peptide. Residue Cys-24 is the site of N-palmitoyl cysteine attachment. Residue Cys-24 is the site of S-diacylglycerol cysteine attachment.

It belongs to the FlgH family. As to quaternary structure, the basal body constitutes a major portion of the flagellar organelle and consists of four rings (L,P,S, and M) mounted on a central rod.

The protein resides in the cell outer membrane. The protein localises to the bacterial flagellum basal body. In terms of biological role, assembles around the rod to form the L-ring and probably protects the motor/basal body from shearing forces during rotation. The chain is Flagellar L-ring protein from Anaeromyxobacter dehalogenans (strain 2CP-1 / ATCC BAA-258).